The sequence spans 108 residues: Small cysteine and glycine repeat-containing protein 8 (108 aa).

A 12 X 2 AA repeats of CG region spans residues 4–84 (CGCGGCGGGC…RRTCSSCGCG (81 aa)).

It belongs to the KRTAP type 28 family.

Functionally, in the hair cortex, hair keratin intermediate filaments are embedded in an interfilamentous matrix, consisting of hair keratin-associated proteins (KRTAP), which are essential for the formation of a rigid and resistant hair shaft through their extensive disulfide bond cross-linking with abundant cysteine residues of hair keratins. The matrix proteins include the high-sulfur and high-glycine-tyrosine keratins. The polypeptide is Small cysteine and glycine repeat-containing protein 8 (Homo sapiens (Human)).